The following is a 432-amino-acid chain: Adenylosuccinate synthetase (432 aa).

GTP is bound by residues 13–19 and 41–43; these read GDEGKGK and GHT. The active-site Proton acceptor is Asp-14. Mg(2+) contacts are provided by Asp-14 and Gly-41. IMP contacts are provided by residues 14 to 17, 39 to 42, Thr-130, Arg-144, Gln-225, Thr-240, and Arg-304; these read DEGK and NAGH. His-42 acts as the Proton donor in catalysis. 300–306 is a binding site for substrate; the sequence is ATTGRKR. GTP-binding positions include Arg-306, 332–334, and 415–417; these read KLD and STG.

The protein belongs to the adenylosuccinate synthetase family. As to quaternary structure, homodimer. Mg(2+) serves as cofactor.

It is found in the cytoplasm. It catalyses the reaction IMP + L-aspartate + GTP = N(6)-(1,2-dicarboxyethyl)-AMP + GDP + phosphate + 2 H(+). It participates in purine metabolism; AMP biosynthesis via de novo pathway; AMP from IMP: step 1/2. Its function is as follows. Plays an important role in the de novo pathway of purine nucleotide biosynthesis. Catalyzes the first committed step in the biosynthesis of AMP from IMP. This is Adenylosuccinate synthetase from Photobacterium profundum (strain SS9).